Consider the following 490-residue polypeptide: 5'-3' exonuclease PLD3 (490 aa).

Topologically, residues 1 to 38 (MKPKLMYQELKVPAEEPASELPMNEIEAWKAAEKKARW) are cytoplasmic. Residues 39-59 (VLLVLILAVVGFGALMTQLFL) traverse the membrane as a helical; Signal-anchor for type II membrane protein segment. The Lumenal segment spans residues 60 to 490 (WEYGDLHLFG…DSVGNACRLL (431 aa)). Intrachain disulfides connect Cys77–Cys239 and Cys81–Cys237. N-linked (GlcNAc...) asparagine glycosylation is found at Asn97 and Asn132. The PLD phosphodiesterase 1 domain maps to 196–223 (THGVLHTKFWVVDQTHFYLGSANMDWRS). Active-site residues include His201, Lys203, and Asp208. Residue His201 is the Proton donor of the active site. Phosphate-binding residues include His201 and Lys203. Asn218 contributes to the phosphate binding site. Residues Asn236, Asn284, and Asn387 are each glycosylated (N-linked (GlcNAc...) asparagine). Cys366 and Cys487 are disulfide-bonded. Residues 411-437 (YARVNHNKYMVTERATYIGTSNWSGSY) form the PLD phosphodiesterase 2 domain. His416 is a phosphate binding site. Catalysis depends on His416, which acts as the Nucleophile. Residue Phe438 coordinates Mg(2+).

Belongs to the phospholipase D family. As to quaternary structure, homodimer. Interacts with APP. Post-translationally, N-glycosylated. Proteolytically processed to a soluble form that is stable within endosomes and lysosomes. During transport through the secretory pathway becomes proteolysed by cysteine proteases, thereby releasing a stable soluble lysosomal lumenal polypeptide, whereas the transmembrane-bound fragment is rapidly degraded. Its transport route to lysosomes involves ubiquitination and the ESCRT complex. In terms of processing, ubiquitinated. Ubiquitination mediates sorting into lysosomes.

The protein localises to the endoplasmic reticulum membrane. Its subcellular location is the lysosome lumen. It localises to the early endosome membrane. It is found in the late endosome membrane. The protein resides in the golgi apparatus membrane. The protein localises to the endosome membrane. It carries out the reaction Exonucleolytic cleavage in the 5'- to 3'-direction to yield nucleoside 3'-phosphates.. The catalysed reaction is a 5'-end 5'-dephospho-ribonucleotidyl-ribonucleotide-RNA + H2O = a ribonucleoside 3'-phosphate + a 5'-end dephospho-ribonucleoside-RNA + H(+). It catalyses the reaction a ribonucleoside 3'-phosphate-2'-3'-cyclophospho-GMP + H2O = a ribonucleoside 3'-phosphate + 2',3'-cyclophospho-GMP + H(+). The enzyme catalyses a 5'-end 5'-dephospho-2'-deoxyribonucleotidyl-2'-deoxyribonucleotide in single-stranded DNA + H2O = a 5'-end dephospho-2'-deoxyribonucleoside in single-stranded DNA + a 2'-deoxyribonucleoside 3'-phosphate + H(+). It carries out the reaction a 5'-end 5'-phospho-2'-deoxyribonucleotide in single-stranded DNA + H2O = a 5'-end 5'-dephospho-2'-deoxyribonucleotide in single-stranded DNA + phosphate. The catalysed reaction is a 3-lyso-sn-glycero-1-phospho-(3'-acyl-1'-sn-glycerol) + a 1-acyl-sn-glycerol = a 3-acyl-sn-glycero-1-phospho-(3'-acyl-1'-sn-glycerol) + glycerol. It catalyses the reaction 3-lyso-sn-glycero-1-phospho-(3'-(9Z-octadecenoyl)-1'-sn-glycerol) + 1-(9Z-octadecenoyl)-sn-glycerol = 3-(9Z-octadecenoyl)-sn-glycero-1-phospho-(3'-(9Z-octadecenoyl)-1'-sn-glycerol) + glycerol. Functionally, 5'-&gt;3' exonuclease that hydrolyzes the phosphodiester bond of single-stranded DNA (ssDNA) and RNA molecules to form nucleoside 3'-monophosphates and 5'-end 5'-hydroxy deoxyribonucleotide/ribonucleotide fragments. Partially redundant with PLD4, can cleave all four nucleotides displaying higher efficiency for ssDNA and RNA fragments initiated with uridine and guanosine residues and lower efficiency for cytidine-initiated substrates. As a result, it does not always degrade polynucleotides to the single nucleotide level, it can stall at specific sites sparing certain fragments from exonucleolytic degradation. Processes self and pathogenic ssDNA and RNA molecules that reach the endolysosomal compartment via phagocytosis or autophagy and may serve as 'danger' signals for recognition by innate immune receptors such as toll-like receptors (TLRs). Degrades mitochondrial CpG-rich ssDNA fragments to prevent TLR9 activation and autoinflammatory response, but it can cleave viral RNA to generate ligands for TLR7 activation and initiate antiviral immune responses. In plasmacytoid dendritic cells, it cooperates with endonuclease RNASET2 to release 2',3'-cyclic guanosine monophosphate (2',3'-cGMP), a potent stimulatory ligand for TLR7. Produces 2',3'-cGMPs and cytidine-rich RNA fragments that occupy TLR7 ligand-binding pockets and trigger a signaling-competent state. Can exert polynucleotide phosphatase activity toward 5'-phosphorylated ssDNA substrates although at a slow rate. Transphosphatidylase that catalyzes the exchange with R to S stereo-inversion of the glycerol moiety between (S,R)-lysophosphatidylglycerol (LPG) and monoacylglycerol (MAG) substrates to yield (S,S)-bis(monoacylglycero)phosphate (BMP). Can synthesize a variety of (S,S)-BMPs representing the main phospholipid constituent of lysosomal intralumenal vesicle (ILV) membranes that bind acid hydrolases for lipid degradation. Regulates the homeostasis and interorganellar communication of the endolysosomal system with an overall impact on cellular removal of dysfunctional organelles via autophagy as well as proper protein and lipid turnover. May play a role in myotube formation in response to ER stress. The polypeptide is 5'-3' exonuclease PLD3 (PLD3) (Bos taurus (Bovine)).